The sequence spans 512 residues: NAD(P)H-quinone oxidoreductase subunit 2 B, chloroplastic (512 aa).

Helical transmembrane passes span 31 to 51 (FIFPECILIFGLILLLMIDLT), 57 to 77 (IPWLYFISSTSFVMSITALLF), 99 to 119 (IFQFLILLCSTLCIPLSVEYI), 124 to 144 (MAITEFLLFILTATLGGMFLC), 149 to 169 (LITIFVALECFSLCSYLLSGY), 183 to 203 (YLLMGGASSSILVYGFSWLYG), 229 to 249 (ISIALIFITVGIGFKLSLAPF), 261 to 281 (PTPVVAFLSVTSKVAALALAT), 295 to 315 (WHLLLEILAILSMIFGNLIAI), 323 to 343 (MLAYSSIGQIGYVIIGIIVGD), 354 to 374 (YMLFYIAMNLGTFACIILFGL), 395 to 415 (ALSLALCLLSLGGLPPLAGFF), 418 to 438 (LYLFWCGWQAGLYFLVSIGLL), and 484 to 504 (MIVCVIASTILGISMNPIIAI).

Belongs to the complex I subunit 2 family. As to quaternary structure, NDH is composed of at least 16 different subunits, 5 of which are encoded in the nucleus.

It localises to the plastid. The protein resides in the chloroplast thylakoid membrane. The enzyme catalyses a plastoquinone + NADH + (n+1) H(+)(in) = a plastoquinol + NAD(+) + n H(+)(out). It carries out the reaction a plastoquinone + NADPH + (n+1) H(+)(in) = a plastoquinol + NADP(+) + n H(+)(out). In terms of biological role, NDH shuttles electrons from NAD(P)H:plastoquinone, via FMN and iron-sulfur (Fe-S) centers, to quinones in the photosynthetic chain and possibly in a chloroplast respiratory chain. The immediate electron acceptor for the enzyme in this species is believed to be plastoquinone. Couples the redox reaction to proton translocation, and thus conserves the redox energy in a proton gradient. The protein is NAD(P)H-quinone oxidoreductase subunit 2 B, chloroplastic of Arabidopsis thaliana (Mouse-ear cress).